Here is a 407-residue protein sequence, read N- to C-terminus: Lysine racemase (407 aa).

The N-terminal stretch at 1–18 is a signal peptide; the sequence is MSLGIRYLALLPLFVITA. C19 carries the N-palmitoyl cysteine lipid modification. The S-diacylglycerol cysteine moiety is linked to residue C19. Residues C70 and C96 are joined by a disulfide bond. K74 serves as the catalytic Proton acceptor. K74 is subject to N6-(pyridoxal phosphate)lysine. R173 serves as a coordination point for substrate. The active-site Proton acceptor is the Y299. Substrate is bound at residue M347.

Belongs to the alanine racemase family. Bsr subfamily. In terms of assembly, forms a head-to-tail homodimer in the structure. It depends on pyridoxal 5'-phosphate as a cofactor.

It localises to the cell membrane. The protein localises to the periplasm. The catalysed reaction is L-lysine = D-lysine. It carries out the reaction L-arginine = D-arginine. With respect to regulation, the racemization activity of Lyr is completely inhibited by hydroxylamine. In terms of biological role, amino-acid racemase that catalyzes the interconversion of L-lysine and D-lysine. To a lesser extent, is also able to interconvert arginine enantiomers. Cannot use methionine, asparagine, alanine, leucine, glutamine, phenylalanine and histidine as substrates. This chain is Lysine racemase, found in Proteus mirabilis.